Consider the following 156-residue polypeptide: Small ribosomal subunit protein uS7 (156 aa).

The protein belongs to the universal ribosomal protein uS7 family. As to quaternary structure, part of the 30S ribosomal subunit. Contacts proteins S9 and S11.

In terms of biological role, one of the primary rRNA binding proteins, it binds directly to 16S rRNA where it nucleates assembly of the head domain of the 30S subunit. Is located at the subunit interface close to the decoding center, probably blocks exit of the E-site tRNA. The chain is Small ribosomal subunit protein uS7 from Brucella anthropi (strain ATCC 49188 / DSM 6882 / CCUG 24695 / JCM 21032 / LMG 3331 / NBRC 15819 / NCTC 12168 / Alc 37) (Ochrobactrum anthropi).